Here is a 535-residue protein sequence, read N- to C-terminus: ABC1 family protein C10F6.14c (535 aa).

Belongs to the protein kinase superfamily. ADCK protein kinase family.

This Schizosaccharomyces pombe (strain 972 / ATCC 24843) (Fission yeast) protein is ABC1 family protein C10F6.14c.